Consider the following 246-residue polypeptide: Bis(5'-nucleosyl)-tetraphosphatase PrpE [asymmetrical] (246 aa).

This sequence belongs to the PrpE family. Requires Ni(2+) as cofactor.

The catalysed reaction is P(1),P(4)-bis(5'-guanosyl) tetraphosphate + H2O = GMP + GTP + 2 H(+). Functionally, asymmetrically hydrolyzes Ap4p to yield AMP and ATP. This is Bis(5'-nucleosyl)-tetraphosphatase PrpE [asymmetrical] from Bacillus cereus (strain ZK / E33L).